The following is a 373-amino-acid chain: AA9 family lytic polysaccharide monooxygenase A (373 aa).

A signal peptide spans 1 to 20; sequence MKSSTFGMLALAAAAKLVSA. A Cu(2+)-binding site is contributed by histidine 21. Residues 36–55 are disordered; it reads EGNSQSGYIRSPPSNSPITD. Cysteine 63 and cysteine 183 are joined by a disulfide. Histidine 102 contacts Cu(2+). Histidine 169 and glutamine 178 together coordinate O2. Tyrosine 180 contacts Cu(2+). Positions 234–333 are disordered; that stretch reads GASGSSSSSS…NSVPQPSSNA (100 aa). Low complexity-rich tracts occupy residues 235–262 and 270–323; these read ASGSSSSSSSSASASAPAPTSAAPAPSS and PATS…AAPT. Residues 324 to 333 show a composition bias toward polar residues; that stretch reads NSVPQPSSNA. One can recognise a CBM1 domain in the interval 335–371; it reads GAVKEWYQCGGLNYSGSTQCEEGLTCKKWNPYYHQCV. Residue asparagine 347 is glycosylated (N-linked (GlcNAc...) asparagine).

This sequence belongs to the polysaccharide monooxygenase AA9 family. Requires Cu(2+) as cofactor.

The protein resides in the secreted. The catalysed reaction is [(1-&gt;4)-beta-D-glucosyl]n+m + reduced acceptor + O2 = 4-dehydro-beta-D-glucosyl-[(1-&gt;4)-beta-D-glucosyl]n-1 + [(1-&gt;4)-beta-D-glucosyl]m + acceptor + H2O.. In terms of biological role, lytic polysaccharide monooxygenase (LPMO) that depolymerizes crystalline and amorphous polysaccharides via the oxidation of scissile alpha- or beta-(1-4)-glycosidic bonds, yielding exclusively C4 oxidation products. Catalysis by LPMOs requires the reduction of the active-site copper from Cu(II) to Cu(I) by a reducing agent and H(2)O(2) or O(2) as a cosubstrate. In addition to cellulose, also cleaves the beta-(1!4)-glucan backbone of tamarind xyloglucan, but only next to unsubstituted glucosyl units. This Aspergillus tamarii protein is AA9 family lytic polysaccharide monooxygenase A.